Reading from the N-terminus, the 371-residue chain is Cytochrome b (371 aa).

The next 4 helical transmembrane spans lie at 25–45, 69–90, 105–125, and 170–190; these read FGSM…FLAI, WIMQ…YIHI, WLSG…GYVL, and FFAL…IHII. Residues histidine 75 and histidine 89 each contribute to the heme b site. The heme b site is built by histidine 174 and histidine 188. Residue histidine 193 coordinates a ubiquinone. Transmembrane regions (helical) follow at residues 218–238, 280–300, 312–332, and 339–358; these read YKDL…LSFS, LGGT…PFTH, LSQT…WTAT, and FITI…IMNP.

It belongs to the cytochrome b family. As to quaternary structure, the cytochrome bc1 complex contains 3 respiratory subunits (MT-CYB, CYC1 and UQCRFS1), 2 core proteins (UQCRC1 and UQCRC2) and probably 6 low-molecular weight proteins. Heme b is required as a cofactor.

The protein resides in the mitochondrion inner membrane. In terms of biological role, component of the ubiquinol-cytochrome c reductase complex (complex III or cytochrome b-c1 complex) that is part of the mitochondrial respiratory chain. The b-c1 complex mediates electron transfer from ubiquinol to cytochrome c. Contributes to the generation of a proton gradient across the mitochondrial membrane that is then used for ATP synthesis. The protein is Cytochrome b (MT-CYB) of Micrurus fulvius (Eastern coral snake).